Consider the following 201-residue polypeptide: MKVVAFERQQQGTGASRRLRNAGKTTGIVYGGEAAPQKIELDHNALWHALKKEAFHASILDLEIAGQSQQVLLRDVQYHPFKQLVLHVDFQRVDAKKKLHTKVPLHFLNAEVSPAVKLSSAIVSHVTTEIEVECLPSALPEFLEVDLSKIEAGQSLHAKDIALPNGVALVAHVDAENPVVASATVPAGAVSDAAEGETPAA.

This sequence belongs to the bacterial ribosomal protein bL25 family. CTC subfamily. As to quaternary structure, part of the 50S ribosomal subunit; part of the 5S rRNA/L5/L18/L25 subcomplex. Contacts the 5S rRNA. Binds to the 5S rRNA independently of L5 and L18.

In terms of biological role, this is one of the proteins that binds to the 5S RNA in the ribosome where it forms part of the central protuberance. This chain is Large ribosomal subunit protein bL25, found in Burkholderia vietnamiensis (strain G4 / LMG 22486) (Burkholderia cepacia (strain R1808)).